A 331-amino-acid polypeptide reads, in one-letter code: Putative T-box protein 36 (331 aa).

Residues 29–210 (EITKKQWNQL…MNRFSRKRKY (182 aa)) constitute a DNA-binding region (T-box).

The protein resides in the nucleus. This is Putative T-box protein 36 (tbx-36) from Caenorhabditis elegans.